We begin with the raw amino-acid sequence, 358 residues long: Glycerophosphodiester phosphodiesterase, periplasmic (358 aa).

The first 25 residues, 1–25 (MKLTLKNLSMAIMMSTIVMGSSAMA), serve as a signal peptide directing secretion. A GP-PDE domain is found at 31–355 (KIVIAHRGAS…DFPDKAVKFL (325 aa)). The Proton acceptor role is filled by His36. Glu63 and Asp65 together coordinate Ca(2+). His78 functions as the Proton donor in the catalytic mechanism. Residue Glu171 participates in Ca(2+) binding.

Belongs to the glycerophosphoryl diester phosphodiesterase family. As to quaternary structure, homodimer. Ca(2+) serves as cofactor.

The protein localises to the periplasm. The enzyme catalyses a sn-glycero-3-phosphodiester + H2O = an alcohol + sn-glycerol 3-phosphate + H(+). Functionally, glycerophosphodiester phosphodiesterase hydrolyzes glycerophosphodiesters into glycerol-3-phosphate (G3P) and the corresponding alcohol. This chain is Glycerophosphodiester phosphodiesterase, periplasmic (glpQ), found in Escherichia coli (strain K12).